The chain runs to 626 residues: DNA polymerase 2 (626 aa).

This sequence belongs to the DNA polymerase type-B family.

The catalysed reaction is DNA(n) + a 2'-deoxyribonucleoside 5'-triphosphate = DNA(n+1) + diphosphate. Functionally, this polymerase is devoid of exonuclease activity. This chain is DNA polymerase 2 (dpo2), found in Saccharolobus solfataricus (strain ATCC 35092 / DSM 1617 / JCM 11322 / P2) (Sulfolobus solfataricus).